A 339-amino-acid polypeptide reads, in one-letter code: Glycerol-3-phosphate dehydrogenase [NAD(P)+] (339 aa).

Positions 11, 12, and 109 each coordinate NADPH. Lys109, Gly140, and Ser142 together coordinate sn-glycerol 3-phosphate. Ala144 contacts NADPH. Residues Lys195, Asp249, Ser259, Arg260, and Asn261 each contribute to the sn-glycerol 3-phosphate site. Lys195 serves as the catalytic Proton acceptor. Arg260 is an NADPH binding site. Residues Val284 and Glu286 each contribute to the NADPH site.

This sequence belongs to the NAD-dependent glycerol-3-phosphate dehydrogenase family.

Its subcellular location is the cytoplasm. The enzyme catalyses sn-glycerol 3-phosphate + NAD(+) = dihydroxyacetone phosphate + NADH + H(+). It carries out the reaction sn-glycerol 3-phosphate + NADP(+) = dihydroxyacetone phosphate + NADPH + H(+). The protein operates within membrane lipid metabolism; glycerophospholipid metabolism. Its function is as follows. Catalyzes the reduction of the glycolytic intermediate dihydroxyacetone phosphate (DHAP) to sn-glycerol 3-phosphate (G3P), the key precursor for phospholipid synthesis. This is Glycerol-3-phosphate dehydrogenase [NAD(P)+] from Lactobacillus acidophilus (strain ATCC 700396 / NCK56 / N2 / NCFM).